The sequence spans 116 residues: Large ribosomal subunit protein uL22 (116 aa).

The protein belongs to the universal ribosomal protein uL22 family. Part of the 50S ribosomal subunit.

In terms of biological role, this protein binds specifically to 23S rRNA; its binding is stimulated by other ribosomal proteins, e.g. L4, L17, and L20. It is important during the early stages of 50S assembly. It makes multiple contacts with different domains of the 23S rRNA in the assembled 50S subunit and ribosome. The globular domain of the protein is located near the polypeptide exit tunnel on the outside of the subunit, while an extended beta-hairpin is found that lines the wall of the exit tunnel in the center of the 70S ribosome. The sequence is that of Large ribosomal subunit protein uL22 from Leptospira biflexa serovar Patoc (strain Patoc 1 / Ames).